The primary structure comprises 250 residues: Ubiquinone/menaquinone biosynthesis C-methyltransferase UbiE (250 aa).

S-adenosyl-L-methionine-binding positions include Thr73, Asp94, 122 to 123 (NA), and Ser139.

It belongs to the class I-like SAM-binding methyltransferase superfamily. MenG/UbiE family.

It carries out the reaction a 2-demethylmenaquinol + S-adenosyl-L-methionine = a menaquinol + S-adenosyl-L-homocysteine + H(+). The enzyme catalyses a 2-methoxy-6-(all-trans-polyprenyl)benzene-1,4-diol + S-adenosyl-L-methionine = a 5-methoxy-2-methyl-3-(all-trans-polyprenyl)benzene-1,4-diol + S-adenosyl-L-homocysteine + H(+). The protein operates within quinol/quinone metabolism; menaquinone biosynthesis; menaquinol from 1,4-dihydroxy-2-naphthoate: step 2/2. Its pathway is cofactor biosynthesis; ubiquinone biosynthesis. Its function is as follows. Methyltransferase required for the conversion of demethylmenaquinol (DMKH2) to menaquinol (MKH2) and the conversion of 2-polyprenyl-6-methoxy-1,4-benzoquinol (DDMQH2) to 2-polyprenyl-3-methyl-6-methoxy-1,4-benzoquinol (DMQH2). The chain is Ubiquinone/menaquinone biosynthesis C-methyltransferase UbiE from Francisella tularensis subsp. mediasiatica (strain FSC147).